Reading from the N-terminus, the 968-residue chain is RNA polymerase-associated protein RapA (968 aa).

Residues 164 to 334 (EVGQRHAPRV…FARLRLLDPD (171 aa)) enclose the Helicase ATP-binding domain. Residue 177–184 (DEVGLGKT) participates in ATP binding. The DEAH box motif lies at 280–283 (DEAH). The region spanning 490–644 (RVEWLLNYLV…TCPTGRTIYD (155 aa)) is the Helicase C-terminal domain.

Belongs to the SNF2/RAD54 helicase family. RapA subfamily. As to quaternary structure, interacts with the RNAP. Has a higher affinity for the core RNAP than for the holoenzyme. Its ATPase activity is stimulated by binding to RNAP.

Transcription regulator that activates transcription by stimulating RNA polymerase (RNAP) recycling in case of stress conditions such as supercoiled DNA or high salt concentrations. Probably acts by releasing the RNAP, when it is trapped or immobilized on tightly supercoiled DNA. Does not activate transcription on linear DNA. Probably not involved in DNA repair. In Yersinia pseudotuberculosis serotype O:1b (strain IP 31758), this protein is RNA polymerase-associated protein RapA.